Reading from the N-terminus, the 549-residue chain is Ribosomal protein S6 kinase-like 1 (549 aa).

Residues 87–115 form the MIT domain; it reads IHVDPNKERREAVKLKITKYLRRAEEIFN. The Protein kinase domain maps to 145–539; the sequence is SAVEQLRGCR…VSKLKSHPFF (395 aa). ATP is bound by residues 151–159 and K177; that span reads RGCRVVGVI. The disordered stretch occupies residues 260–325; the sequence is LTPARLPSGH…SDLPKAPGGH (66 aa). D412 acts as the Proton acceptor in catalysis.

It belongs to the protein kinase superfamily. Ser/Thr protein kinase family. S6 kinase subfamily.

The catalysed reaction is L-seryl-[protein] + ATP = O-phospho-L-seryl-[protein] + ADP + H(+). It catalyses the reaction L-threonyl-[protein] + ATP = O-phospho-L-threonyl-[protein] + ADP + H(+). The chain is Ribosomal protein S6 kinase-like 1 (RPS6KL1) from Pongo abelii (Sumatran orangutan).